Consider the following 255-residue polypeptide: MFVNLNKSLIAQRFAKARQSYVENAIAQKKISHHLCHLMQAYCPLHLSRIFEIGCGSGNLTQELFVSFQIQRAYLNDLYDEVKQHFLDEQPIEWCIGDIESLSLPEHLNAIVSSSAIQWVQNLPQLLGRCHHALNDQGWLCLSTFGSDNFKEIKQLTGQGLSYWSVQDWQVHLQASGFELMKIEQQQLKMQFDSPRAILKHLKATGVTGTVATTQPHWNKQSLAQFYHDYCQFQTDDGHYELTYHPIYIIARRTS.

It belongs to the methyltransferase superfamily.

The enzyme catalyses malonyl-[ACP] + S-adenosyl-L-methionine = malonyl-[ACP] methyl ester + S-adenosyl-L-homocysteine. It participates in cofactor biosynthesis; biotin biosynthesis. Converts the free carboxyl group of a malonyl-thioester to its methyl ester by transfer of a methyl group from S-adenosyl-L-methionine (SAM). It allows to synthesize pimeloyl-ACP via the fatty acid synthetic pathway. This chain is Malonyl-[acyl-carrier protein] O-methyltransferase, found in Acinetobacter baylyi (strain ATCC 33305 / BD413 / ADP1).